Reading from the N-terminus, the 217-residue chain is Ribosomal large subunit pseudouridine synthase E (217 aa).

Asp79 (nucleophile) is an active-site residue.

The protein belongs to the pseudouridine synthase RsuA family.

It catalyses the reaction uridine(2457) in 23S rRNA = pseudouridine(2457) in 23S rRNA. Functionally, responsible for synthesis of pseudouridine from uracil-2457 in 23S ribosomal RNA. The polypeptide is Ribosomal large subunit pseudouridine synthase E (rluE) (Escherichia coli O6:H1 (strain CFT073 / ATCC 700928 / UPEC)).